The sequence spans 714 residues: DNA ligase (714 aa).

Residues 40-44 (DADYD), 90-91 (SL), and Glu124 contribute to the NAD(+) site. The active-site N6-AMP-lysine intermediate is the Lys126. Positions 147, 183, 304, and 328 each coordinate NAD(+). Residues Cys420, Cys423, Cys438, and Cys444 each contribute to the Zn(2+) site. The region spanning 634 to 714 (TRDSEVSGKT…EWAAIVAAAG (81 aa)) is the BRCT domain.

The protein belongs to the NAD-dependent DNA ligase family. LigA subfamily. Mg(2+) serves as cofactor. The cofactor is Mn(2+).

It carries out the reaction NAD(+) + (deoxyribonucleotide)n-3'-hydroxyl + 5'-phospho-(deoxyribonucleotide)m = (deoxyribonucleotide)n+m + AMP + beta-nicotinamide D-nucleotide.. Its function is as follows. DNA ligase that catalyzes the formation of phosphodiester linkages between 5'-phosphoryl and 3'-hydroxyl groups in double-stranded DNA using NAD as a coenzyme and as the energy source for the reaction. It is essential for DNA replication and repair of damaged DNA. The polypeptide is DNA ligase (Sphingopyxis alaskensis (strain DSM 13593 / LMG 18877 / RB2256) (Sphingomonas alaskensis)).